The following is a 364-amino-acid chain: Chorismate synthase (364 aa).

A disordered region spans residues 41–60; sequence MQHDLDRRRPGTSRYTTARR. Residues R48 and R54 each coordinate NADP(+). Residues 125–127, 238–239, G278, 293–297, and R319 each bind FMN; these read RSS, NA, and KPTSS.

It belongs to the chorismate synthase family. As to quaternary structure, homotetramer. FMNH2 is required as a cofactor.

The enzyme catalyses 5-O-(1-carboxyvinyl)-3-phosphoshikimate = chorismate + phosphate. Its pathway is metabolic intermediate biosynthesis; chorismate biosynthesis; chorismate from D-erythrose 4-phosphate and phosphoenolpyruvate: step 7/7. Functionally, catalyzes the anti-1,4-elimination of the C-3 phosphate and the C-6 proR hydrogen from 5-enolpyruvylshikimate-3-phosphate (EPSP) to yield chorismate, which is the branch point compound that serves as the starting substrate for the three terminal pathways of aromatic amino acid biosynthesis. This reaction introduces a second double bond into the aromatic ring system. The sequence is that of Chorismate synthase from Shewanella sp. (strain MR-4).